A 318-amino-acid polypeptide reads, in one-letter code: Mevalonate 3-kinase (318 aa).

Leucine 19 contacts substrate. Residues 96-100 (YSSQN) and 105-108 (SGSS) contribute to the ATP site. Glutamate 140 and arginine 144 together coordinate substrate. Arginine 185 and serine 188 together coordinate ATP.

The protein belongs to the GHMP kinase family. In terms of assembly, homodimer.

It carries out the reaction (R)-mevalonate + ATP = (R)-3-phosphomevalonate + ADP + H(+). Its pathway is isoprenoid biosynthesis; isopentenyl diphosphate biosynthesis via mevalonate pathway. Its function is as follows. Catalyzes the phosphorylation of mevalonate (MVA) to yield mevalonate-3-phosphate. Functions in an alternative mevalonate pathway, only present in extreme acidophiles of the Thermoplasmatales order, which passes through mevalonate 3-phosphate rather than mevalonate 5-phosphate. This Thermoplasma acidophilum (strain ATCC 25905 / DSM 1728 / JCM 9062 / NBRC 15155 / AMRC-C165) protein is Mevalonate 3-kinase.